Reading from the N-terminus, the 156-residue chain is MKLNELRDNPGASPKRTRVGRGPGSGKGKMGGRGIKGQKSRSGVAINGYEGGQMPLYQRLPKRGFNKPNAKKYAVVNLGLIQKFIDAGKLDAASITEDSLVASGLVRRKLDGIRVLAKGEFTAKATIAVTGASKSAVEAVSKAGGALTVASEAAAE.

The disordered stretch occupies residues 1–44; the sequence is MKLNELRDNPGASPKRTRVGRGPGSGKGKMGGRGIKGQKSRSGV. Gly residues predominate over residues 21–35; that stretch reads RGPGSGKGKMGGRGI.

This sequence belongs to the universal ribosomal protein uL15 family. In terms of assembly, part of the 50S ribosomal subunit.

Its function is as follows. Binds to the 23S rRNA. The polypeptide is Large ribosomal subunit protein uL15 (Ruegeria sp. (strain TM1040) (Silicibacter sp.)).